The primary structure comprises 473 residues: Phosphatidylserine synthase 1 (473 aa).

At 1-35 (MAACVGSRTLSKDDVNYRLHFRMINEQQVEDITLE) the chain is on the cytoplasmic side. A helical transmembrane segment spans residues 36-56 (FFYRPHTITLLSFTILSLMAF). Topologically, residues 57–72 (AFTRDDSVPEENIWRG) are lumenal. Residues 73–93 (ILSVIFFFLIISVLAFPNGPF) traverse the membrane as a helical segment. Topologically, residues 94-102 (TRPHPAIWR) are cytoplasmic. Residues 103-123 (MVFGLSVLYFLFLVFVLFLNF) traverse the membrane as a helical segment. At 124–186 (EQVKAVMYWL…AMKALLIRSY (63 aa)) the chain is on the lumenal side. The chain crosses the membrane as a helical span at residues 187-207 (GLCWTISITWELTELFFMHLL). The Cytoplasmic portion of the chain corresponds to 208–216 (PNFAECWWD). A helical membrane pass occupies residues 217 to 237 (QVILDILLCNGGGIWLGMVVC). Residues 238-286 (RFLEMRTYHWASFKDIHTTTGKIKRAVLQFTPASWTYVRWFDPKSSFQR) are Lumenal-facing. A helical membrane pass occupies residues 287-307 (VAGIYLFMIIWQLTELNTFFL). At 308–319 (KHIFVFQASHPL) the chain is on the cytoplasmic side. The helical transmembrane segment at 320–342 (SWGRILFIGIITAPTVRQYYAYL) threads the bilayer. Topologically, residues 343–355 (TDTQCKRVGTQCW) are lumenal. A helical membrane pass occupies residues 356-376 (VFGVIAFLEAIVCIKFGQDLF). Over 377–380 (SKTQ) the chain is Cytoplasmic. Residues 381-401 (ILYVVFWLLCVAFTTFLCLYG) traverse the membrane as a helical segment. The Lumenal segment spans residues 402–473 (MVWYAEYYGH…SKVTNGIGKK (72 aa)). The tract at residues 420 to 473 (EDSPYSPDASWLHSKFSKGADNSPPKHPVNSESHSSRRRNRHSRSKVTNGIGKK) is disordered. The span at 455-464 (SRRRNRHSRS) shows a compositional bias: basic residues.

Belongs to the phosphatidyl serine synthase family.

It is found in the endoplasmic reticulum membrane. It carries out the reaction a 1,2-diacyl-sn-glycero-3-phosphoethanolamine + L-serine = a 1,2-diacyl-sn-glycero-3-phospho-L-serine + ethanolamine. The catalysed reaction is a 1,2-diacyl-sn-glycero-3-phosphocholine + L-serine = a 1,2-diacyl-sn-glycero-3-phospho-L-serine + choline. The protein operates within phospholipid metabolism; phosphatidylserine biosynthesis. Functionally, catalyzes a base-exchange reaction in which the polar head group of phosphatidylethanolamine (PE) or phosphatidylcholine (PC) is replaced by L-serine. Catalyzes mainly the conversion of phosphatidylcholine but also converts, in vitro and to a lesser extent, phosphatidylethanolamine. In Gallus gallus (Chicken), this protein is Phosphatidylserine synthase 1 (PTDSS1).